The chain runs to 177 residues: Mitochondrial inner membrane protease subunit 2 (177 aa).

Catalysis depends on residues serine 41 and lysine 91. A helical membrane pass occupies residues 134 to 152 (TFGPISSGLVIGKAITIVW).

This sequence belongs to the peptidase S26 family. IMP2 subfamily. Component of the mitochondrial inner membrane peptidase (IMP) complex which at least consists of IMP1, IMP2 and SOM1. The N-terminus is blocked.

It localises to the mitochondrion inner membrane. In terms of biological role, catalytic component of the mitochondrial inner membrane peptidase (IMP) complex. IMP catalyzes the removal of signal peptides required for the targeting of proteins from the mitochondrial matrix, across the inner membrane, into the inter-membrane space. The two catalytic IMP subunits seem to have non-overlapping substrate specificities. IMP2 substrates include nuclear encoded CYB2, mitochondrially encoded COX2 and cytochrome c1. Required for the stability of IMP1. This is Mitochondrial inner membrane protease subunit 2 (IMP2) from Saccharomyces cerevisiae (strain ATCC 204508 / S288c) (Baker's yeast).